Here is a 412-residue protein sequence, read N- to C-terminus: Short-chain specific acyl-CoA dehydrogenase, mitochondrial (412 aa).

The transit peptide at 1–24 (MAAALLARASGPARRALCPRAWRQ) directs the protein to the mitochondrion. A Phosphothreonine modification is found at T27. Residue K51 is modified to N6-acetyllysine; alternate. K51 carries the N6-succinyllysine; alternate modification. K72 is modified (N6-acetyllysine). K129 bears the N6-acetyllysine; alternate mark. K129 is subject to N6-succinyllysine; alternate. FAD-binding positions include 152 to 161 (FALSEPGNGS) and 185 to 187 (WIT). Residue S161 coordinates substrate. K208 carries the N6-acetyllysine modification. The residue at position 262 (K262) is an N6-acetyllysine; alternate. K262 is subject to N6-succinyllysine; alternate. 269-272 (DMGR) serves as a coordination point for substrate. R297 serves as a coordination point for FAD. N6-acetyllysine; alternate is present on K306. Residue K306 is modified to N6-succinyllysine; alternate. Residues Q308 and 365–369 (QILGG) contribute to the FAD site. E392 acts as the Proton acceptor in catalysis. Substrate is bound at residue G393. An FAD-binding site is contributed by 394–396 (TSE).

The protein belongs to the acyl-CoA dehydrogenase family. In terms of assembly, homotetramer. It depends on FAD as a cofactor.

The protein resides in the mitochondrion matrix. It carries out the reaction a short-chain 2,3-saturated fatty acyl-CoA + oxidized [electron-transfer flavoprotein] + H(+) = a short-chain (2E)-enoyl-CoA + reduced [electron-transfer flavoprotein]. The catalysed reaction is butanoyl-CoA + oxidized [electron-transfer flavoprotein] + H(+) = (2E)-butenoyl-CoA + reduced [electron-transfer flavoprotein]. It catalyses the reaction pentanoyl-CoA + oxidized [electron-transfer flavoprotein] + H(+) = (2E)-pentenoyl-CoA + reduced [electron-transfer flavoprotein]. The enzyme catalyses hexanoyl-CoA + oxidized [electron-transfer flavoprotein] + H(+) = (2E)-hexenoyl-CoA + reduced [electron-transfer flavoprotein]. It participates in lipid metabolism; mitochondrial fatty acid beta-oxidation. Functionally, short-chain specific acyl-CoA dehydrogenase is one of the acyl-CoA dehydrogenases that catalyze the first step of mitochondrial fatty acid beta-oxidation, an aerobic process breaking down fatty acids into acetyl-CoA and allowing the production of energy from fats. The first step of fatty acid beta-oxidation consists in the removal of one hydrogen from C-2 and C-3 of the straight-chain fatty acyl-CoA thioester, resulting in the formation of trans-2-enoyl-CoA. Among the different mitochondrial acyl-CoA dehydrogenases, short-chain specific acyl-CoA dehydrogenase acts specifically on acyl-CoAs with saturated 4 to 6 carbons long primary chains. The chain is Short-chain specific acyl-CoA dehydrogenase, mitochondrial (ACADS) from Homo sapiens (Human).